Consider the following 309-residue polypeptide: Probable copper-dependent oxygenase clz3 (309 aa).

Asn-9 and Asn-249 each carry an N-linked (GlcNAc...) asparagine glycan. A helical membrane pass occupies residues 257–277; it reads FAVPLAAIAFIALIISGGYVI.

The protein belongs to the clz3 oxygenase family.

Its subcellular location is the membrane. Its pathway is secondary metabolite biosynthesis. In terms of biological role, probable copper-dependent oxygenase; part of the gene cluster that mediates the biosynthesis of squalestatin S1 (SQS1, also known as zaragozic acid A), a heavily oxidized fungal polyketide that offers potent cholesterol lowering activity by targeting squalene synthase (SS). SQS1 is composed of a 2,8-dioxobicyclic[3.2.1]octane-3,4,5-tricarboxyclic acid core that is connected to two lipophilic polyketide arms. These initial steps feature the priming of an unusual benzoic acid starter unit onto the highly reducing polyketide synthase clz14, followed by oxaloacetate extension and product release to generate a tricarboxylic acid containing product. The phenylalanine ammonia lyase (PAL) clz10 and the acyl-CoA ligase clz12 are involved in transforming phenylalanine into benzoyl-CoA. The citrate synthase-like protein clz17 is involved in connecting the C-alpha-carbons of the hexaketide chain and oxaloacetate to afford the tricarboxylic acid unit. The potential hydrolytic enzymes, clz11 and clz13, are in close proximity to pks2 and may participate in product release. On the other side, the tetraketide arm is synthesized by a the squalestatin tetraketide synthase clz2 and enzymatically esterified to the core in the last biosynthetic step, by the acetyltransferase clz6. The biosynthesis of the tetraketide must involve 3 rounds of chain extension. After the first and second rounds methyl-transfer occurs, and in all rounds of extension the ketoreductase and dehydratase are active. The enoyl reductase and C-MeT of clz2 are not active in the final round of extension. The acetyltransferase clz6 appears to have a broad substrate selectivity for its acyl CoA substrate, allowing the in vitro synthesis of novel squalestatins. The biosynthesis of SQS1 requires several oxidative steps likely performed by oxidoreductases clz3, clz15 and clz16. Finally, in support of the identification of the cluster as being responsible for SQS1 production, the cluster contains a gene encoding a putative squalene synthase (SS) clz20, suggesting a likely mechanism for self-resistance. The polypeptide is Probable copper-dependent oxygenase clz3 (Cochliobolus lunatus (Filamentous fungus)).